A 193-amino-acid chain; its full sequence is Histone H5 (193 aa).

A compositionally biased stretch (pro residues) spans threonine 1–alanine 11. 2 disordered regions span residues threonine 1–tyrosine 29 and glycine 80–lysine 193. A compositionally biased stretch (basic residues) spans lysine 13 to alanine 24. Residues serine 25 to lysine 98 enclose the H15 domain. Residues arginine 104–lysine 193 show a composition bias toward basic residues.

Belongs to the histone H1/H5 family. As to expression, erythroid cells.

Its subcellular location is the nucleus. It is found in the chromosome. Functionally, histone H5 performs the same function as H1, being necessary for the condensation of nucleosome chains into higher order structures, and replaces histone H1 in certain cells. In Anser anser anser (Western greylag goose), this protein is Histone H5.